We begin with the raw amino-acid sequence, 428 residues long: Maltoporin (428 aa).

A signal peptide spans 1-24; it reads MKSMRILPISLTIMAGLLSIEASA.

Belongs to the porin LamB (TC 1.B.3) family. In terms of assembly, homotrimer formed of three 18-stranded antiparallel beta-barrels, containing three independent channels.

The protein resides in the cell outer membrane. It catalyses the reaction beta-maltose(in) = beta-maltose(out). Functionally, involved in the transport of maltose and maltodextrins. The protein is Maltoporin of Photorhabdus laumondii subsp. laumondii (strain DSM 15139 / CIP 105565 / TT01) (Photorhabdus luminescens subsp. laumondii).